A 185-amino-acid polypeptide reads, in one-letter code: Ribosome-recycling factor (185 aa).

The disordered stretch occupies residues 140-168 (KKEQKDGNITEDEQRNLEKQVQKITDDST).

Belongs to the RRF family.

The protein localises to the cytoplasm. Its function is as follows. Responsible for the release of ribosomes from messenger RNA at the termination of protein biosynthesis. May increase the efficiency of translation by recycling ribosomes from one round of translation to another. The chain is Ribosome-recycling factor from Lactobacillus helveticus (strain DPC 4571).